Consider the following 306-residue polypeptide: Agmatinase (306 aa).

Mn(2+) is bound by residues histidine 126, aspartate 149, histidine 151, aspartate 153, aspartate 230, and aspartate 232.

This sequence belongs to the arginase family. Agmatinase subfamily. Mn(2+) serves as cofactor.

It catalyses the reaction agmatine + H2O = urea + putrescine. Its pathway is amine and polyamine biosynthesis; putrescine biosynthesis via agmatine pathway; putrescine from agmatine: step 1/1. In terms of biological role, catalyzes the formation of putrescine from agmatine. The chain is Agmatinase from Cronobacter sakazakii (strain ATCC BAA-894) (Enterobacter sakazakii).